The following is a 201-amino-acid chain: MNETNDNDIDQLIYLFSKLPGLGIRSARRIALYLLQDKDVRLKSLINNLVEIDKKIVKCEICGNMDTENMCRICSSEYRDKSIIAIVETVAELWAMERSGNFKGLYHVLGHNLSAASRQNPSILRLPELLTRCFAENIKEVIIATNSTLEGQTTAYFITEYLKEHPAKISRLASGIPIGGELDYLDEGTVSAAINLRQPFE.

Residues 59–74 (CEICGNMDTENMCRIC) form a C4-type zinc finger. Residues 82–177 (SIIAIVETVA…KISRLASGIP (96 aa)) enclose the Toprim domain.

This sequence belongs to the RecR family.

Functionally, may play a role in DNA repair. It seems to be involved in an RecBC-independent recombinational process of DNA repair. It may act with RecF and RecO. The protein is Recombination protein RecR of Rickettsia africae (strain ESF-5).